Consider the following 760-residue polypeptide: ATP-dependent zinc metalloprotease FtsH (760 aa).

At 1–5 (MNRKN) the chain is on the cytoplasmic side. Residues 6-26 (VTRTITAIAVVVLLGWSFFYF) form a helical membrane-spanning segment. Residues 27 to 110 (SDDTRGYKPV…KVSTVVNQGS (84 aa)) lie on the Extracellular side of the membrane. A helical membrane pass occupies residues 111-131 (ILGELLVYVLPLLLLVGLFVM). Residues 132-760 (FSRMQGGARM…EVSRTKPAHG (629 aa)) lie on the Cytoplasmic side of the membrane. Residue 203 to 210 (GPPGTGKT) coordinates ATP. Residue His-425 participates in Zn(2+) binding. Residue Glu-426 is part of the active site. Positions 429 and 501 each coordinate Zn(2+). Positions 616–760 (DFGGRIPSDK…EVSRTKPAHG (145 aa)) are disordered. Positions 650–669 (AFKAAIAQATQAAEAARSDA) are enriched in low complexity. A compositionally biased stretch (acidic residues) spans 740-750 (GSDESSAEQDD).

In the central section; belongs to the AAA ATPase family. The protein in the C-terminal section; belongs to the peptidase M41 family. In terms of assembly, homohexamer. Zn(2+) is required as a cofactor.

Its subcellular location is the cell membrane. Functionally, acts as a processive, ATP-dependent zinc metallopeptidase for both cytoplasmic and membrane proteins. Plays a role in the quality control of integral membrane proteins. The protein is ATP-dependent zinc metalloprotease FtsH of Mycobacterium tuberculosis (strain CDC 1551 / Oshkosh).